The chain runs to 144 residues: MNFKYIVAVSFLIASAYARSVQNDEQSLSQRDVLEEESLREIRSIGAKILGGVKTFFKGALKELASTYLQRKRTAEDHEEMKRLEAVMRDLDSLDYPEEASERETRGFNQEEIANLFTKKEKRILGPVISKIGGVLGGLLKNLG.

Residues 1 to 18 form the signal peptide; it reads MNFKYIVAVSFLIASAYA. 2 consecutive propeptides follow at residues 19–43 and 74–123; these read RSVQ…REIR and TAED…KEKR. A Leucine amide modification is found at leucine 143.

Belongs to the bombinin family. Expressed by the skin glands.

It is found in the secreted. Maximin-5 shows antibacterial activity against both Gram-positive and Gram-negative bacteria. The only exception is the resistance of E.coli. Also shows antimicrobial activity against fungi C.albicans, A.flavus and P.uticale. It has little hemolytic activity. It does not possess a significant cytotoxicity against tumor cell lines. It does not possess a significant anti-HIV activity. In terms of biological role, maximin-H4 shows antibacterial activity against both Gram-positive and Gram-negative bacteria. It also shows antimicrobial activity against the fungus C.albicans. Shows strong hemolytic activity. The polypeptide is Maximins 5/H4 type 3 (Bombina maxima (Giant fire-bellied toad)).